An 85-amino-acid polypeptide reads, in one-letter code: Small ribosomal subunit protein uS17 (85 aa).

The protein belongs to the universal ribosomal protein uS17 family. In terms of assembly, part of the 30S ribosomal subunit.

In terms of biological role, one of the primary rRNA binding proteins, it binds specifically to the 5'-end of 16S ribosomal RNA. The chain is Small ribosomal subunit protein uS17 from Trichlorobacter lovleyi (strain ATCC BAA-1151 / DSM 17278 / SZ) (Geobacter lovleyi).